The primary structure comprises 534 residues: Major facilitator-type transporter sor6 (534 aa).

Residues asparagine 29 and asparagine 36 are each glycosylated (N-linked (GlcNAc...) asparagine). The next 12 helical transmembrane spans lie at tryptophan 66–tyrosine 86, leucine 103–glycine 123, alanine 160–leucine 180, phenylalanine 182–leucine 202, glycine 209–valine 229, tryptophan 241–valine 261, isoleucine 318–glycine 338, phenylalanine 354–isoleucine 374, leucine 395–threonine 415, valine 424–valine 444, alanine 456–phenylalanine 476, and isoleucine 486–phenylalanine 506.

This sequence belongs to the major facilitator superfamily. Sugar transporter (TC 2.A.1.1) family.

It is found in the membrane. Major facilitator-type transporter; part of the gene cluster that mediates the biosynthesis of sorbicillinoids, a diverse group of yellow secondary metabolites that restrict growth of competing pathogenic fungi but not of bacteria. The polypeptide is Major facilitator-type transporter sor6 (Hypocrea jecorina (strain QM6a) (Trichoderma reesei)).